Consider the following 164-residue polypeptide: Large ribosomal subunit protein uL15 (164 aa).

Positions 1 to 14 (MKLNEIQDNPGSSK) are enriched in polar residues. A disordered region spans residues 1–35 (MKLNEIQDNPGSSKSRMRVGRGIGSGKGKTCGRGV). Positions 21–35 (RGIGSGKGKTCGRGV) are enriched in gly residues.

Belongs to the universal ribosomal protein uL15 family. In terms of assembly, part of the 50S ribosomal subunit.

Its function is as follows. Binds to the 23S rRNA. The chain is Large ribosomal subunit protein uL15 from Methylocella silvestris (strain DSM 15510 / CIP 108128 / LMG 27833 / NCIMB 13906 / BL2).